The following is a 180-amino-acid chain: Ribulose bisphosphate carboxylase small subunit, chloroplastic (180 aa).

Residues 1 to 56 constitute a chloroplast transit peptide; sequence MASSVLSSAAVATRSNVAQANMVAPFTGLKSAASFPVSRKQNLDITSIASNGGRVQ.

The protein belongs to the RuBisCO small chain family. Heterohexadecamer of 8 large and 8 small subunits.

Its subcellular location is the plastid. The protein resides in the chloroplast. In terms of biological role, ruBisCO catalyzes two reactions: the carboxylation of D-ribulose 1,5-bisphosphate, the primary event in carbon dioxide fixation, as well as the oxidative fragmentation of the pentose substrate. Both reactions occur simultaneously and in competition at the same active site. Although the small subunit is not catalytic it is essential for maximal activity. The chain is Ribulose bisphosphate carboxylase small subunit, chloroplastic from Nicotiana plumbaginifolia (Leadwort-leaved tobacco).